A 121-amino-acid polypeptide reads, in one-letter code: Large ribosomal subunit protein bL12 (121 aa).

Belongs to the bacterial ribosomal protein bL12 family. In terms of assembly, homodimer. Part of the ribosomal stalk of the 50S ribosomal subunit. Forms a multimeric L10(L12)X complex, where L10 forms an elongated spine to which 2 to 4 L12 dimers bind in a sequential fashion. Binds GTP-bound translation factors.

Forms part of the ribosomal stalk which helps the ribosome interact with GTP-bound translation factors. Is thus essential for accurate translation. The chain is Large ribosomal subunit protein bL12 from Vibrio cholerae serotype O1 (strain ATCC 39541 / Classical Ogawa 395 / O395).